Reading from the N-terminus, the 83-residue chain is Cytochrome b559 subunit alpha (83 aa).

Residues Val21–Trp35 form a helical membrane-spanning segment. Position 23 (His23) interacts with heme.

It belongs to the PsbE/PsbF family. In terms of assembly, heterodimer of an alpha subunit and a beta subunit. PSII is composed of 1 copy each of membrane proteins PsbA, PsbB, PsbC, PsbD, PsbE, PsbF, PsbH, PsbI, PsbJ, PsbK, PsbL, PsbM, PsbT, PsbX, PsbY, PsbZ, Psb30/Ycf12, at least 3 peripheral proteins of the oxygen-evolving complex and a large number of cofactors. It forms dimeric complexes. Requires heme b as cofactor.

The protein resides in the plastid. Its subcellular location is the chloroplast thylakoid membrane. Functionally, this b-type cytochrome is tightly associated with the reaction center of photosystem II (PSII). PSII is a light-driven water:plastoquinone oxidoreductase that uses light energy to abstract electrons from H(2)O, generating O(2) and a proton gradient subsequently used for ATP formation. It consists of a core antenna complex that captures photons, and an electron transfer chain that converts photonic excitation into a charge separation. In Psilotum nudum (Whisk fern), this protein is Cytochrome b559 subunit alpha.